The sequence spans 475 residues: Probable proline--tRNA ligase, mitochondrial (475 aa).

The N-terminal 29 residues, 1-29 (MEGLLTRCRALPALATCSRQLSGYVPCRF), are a transit peptide targeting the mitochondrion.

Belongs to the class-II aminoacyl-tRNA synthetase family.

It localises to the mitochondrion matrix. The enzyme catalyses tRNA(Pro) + L-proline + ATP = L-prolyl-tRNA(Pro) + AMP + diphosphate. In terms of biological role, mitochondrial aminoacyl-tRNA synthetase that catalyzes the specific attachment of the proline amino acid (aa) to the homologous transfer RNA (tRNA), further participating in protein synthesis. The reaction occurs in a two steps: proline is first activated by ATP to form Pro-AMP and then transferred to the acceptor end of tRNA(Pro). This chain is Probable proline--tRNA ligase, mitochondrial, found in Homo sapiens (Human).